A 276-amino-acid polypeptide reads, in one-letter code: Large ribosomal subunit protein uL2 (276 aa).

The tract at residues 224-276 (AMNPIDHPHGGGEGKTSGGRNPVTPWGVPTKGKKTRKRNKSSNKYIKRVSDKG) is disordered. Basic residues predominate over residues 254 to 270 (KGKKTRKRNKSSNKYIK).

It belongs to the universal ribosomal protein uL2 family. As to quaternary structure, part of the 50S ribosomal subunit. Forms a bridge to the 30S subunit in the 70S ribosome.

Functionally, one of the primary rRNA binding proteins. Required for association of the 30S and 50S subunits to form the 70S ribosome, for tRNA binding and peptide bond formation. It has been suggested to have peptidyltransferase activity; this is somewhat controversial. Makes several contacts with the 16S rRNA in the 70S ribosome. This Ehrlichia canis (strain Jake) protein is Large ribosomal subunit protein uL2.